A 1615-amino-acid chain; its full sequence is ABC transporter A family member 4 (1615 aa).

Helical transmembrane passes span 30 to 50, 233 to 253, 278 to 298, 308 to 328, 337 to 357, 365 to 385, and 405 to 425; these read ILLP…SMII, GVFI…NIVI, SIIS…ILSA, ITLI…AFIL, YAGL…IIIG, LKLL…YVWC, and YEII…LWYL. Residues 182–383 enclose the ABC transmembrane type-2 domain; it reads TQIQTGVDQA…PIAISVANYV (202 aa). One can recognise an ABC transporter 1 domain in the interval 492–727; it reads ISIRNLRKEF…FGVGYLLTIS (236 aa). 528 to 535 lines the ATP pocket; sequence GPNGSGKS. The next 7 membrane-spanning stretches (helical) occupy residues 855–875, 1022–1042, 1075–1095, 1106–1126, 1135–1155, 1174–1194, and 1218–1238; these read IKSF…GLIL, FVAI…IAAS, IWDY…IIAV, YISG…LMSF, VGAI…ISFI, IIEY…ILAI, and LLPN…ILLI. In terms of domain architecture, ABC transporter 2 spans 1293–1528; that stretch reads IIFNNLYKKF…FGSGYSIEVK (236 aa). 1331–1338 is a binding site for ATP; the sequence is GLNGCGKS.

It belongs to the ABC transporter superfamily. ABCA family.

It is found in the membrane. This Dictyostelium discoideum (Social amoeba) protein is ABC transporter A family member 4 (abcA4).